A 313-amino-acid chain; its full sequence is Ribonuclease HIII (313 aa).

Residues 94-310 (MSVIGSDEVG…TQKAKRLVER (217 aa)) enclose the RNase H type-2 domain. Residues Asp100, Glu101, and Asp205 each contribute to the a divalent metal cation site.

It belongs to the RNase HII family. RnhC subfamily. Mn(2+) serves as cofactor. Requires Mg(2+) as cofactor.

It localises to the cytoplasm. It carries out the reaction Endonucleolytic cleavage to 5'-phosphomonoester.. Functionally, endonuclease that specifically degrades the RNA of RNA-DNA hybrids. The protein is Ribonuclease HIII of Bacillus velezensis (strain DSM 23117 / BGSC 10A6 / LMG 26770 / FZB42) (Bacillus amyloliquefaciens subsp. plantarum).